The following is a 395-amino-acid chain: Succinyl-diaminopimelate desuccinylase (395 aa).

Position 74 (His-74) interacts with Zn(2+). Asp-76 is an active-site residue. Residue Asp-107 participates in Zn(2+) binding. Glu-141 functions as the Proton acceptor in the catalytic mechanism. Zn(2+) is bound by residues Glu-142, Glu-170, and His-368.

Belongs to the peptidase M20A family. DapE subfamily. In terms of assembly, homodimer. The cofactor is Zn(2+). Co(2+) is required as a cofactor.

The enzyme catalyses N-succinyl-(2S,6S)-2,6-diaminopimelate + H2O = (2S,6S)-2,6-diaminopimelate + succinate. It participates in amino-acid biosynthesis; L-lysine biosynthesis via DAP pathway; LL-2,6-diaminopimelate from (S)-tetrahydrodipicolinate (succinylase route): step 3/3. Its function is as follows. Catalyzes the hydrolysis of N-succinyl-L,L-diaminopimelic acid (SDAP), forming succinate and LL-2,6-diaminopimelate (DAP), an intermediate involved in the bacterial biosynthesis of lysine and meso-diaminopimelic acid, an essential component of bacterial cell walls. The polypeptide is Succinyl-diaminopimelate desuccinylase (Brucella canis (strain ATCC 23365 / NCTC 10854 / RM-666)).